The following is a 509-amino-acid chain: 2-isopropylmalate synthase (509 aa).

Positions 5 to 267 (IQIFDTTLRD…QTALNLEETK (263 aa)) constitute a Pyruvate carboxyltransferase domain. Positions 14, 202, 204, and 238 each coordinate Mn(2+). A regulatory domain region spans residues 391–509 (KLETLQLQYV…AAENVEKVGN (119 aa)).

Belongs to the alpha-IPM synthase/homocitrate synthase family. LeuA type 1 subfamily. Homodimer. It depends on Mn(2+) as a cofactor.

It is found in the cytoplasm. It carries out the reaction 3-methyl-2-oxobutanoate + acetyl-CoA + H2O = (2S)-2-isopropylmalate + CoA + H(+). Its pathway is amino-acid biosynthesis; L-leucine biosynthesis; L-leucine from 3-methyl-2-oxobutanoate: step 1/4. Catalyzes the condensation of the acetyl group of acetyl-CoA with 3-methyl-2-oxobutanoate (2-ketoisovalerate) to form 3-carboxy-3-hydroxy-4-methylpentanoate (2-isopropylmalate). The protein is 2-isopropylmalate synthase of Staphylococcus aureus (strain MW2).